The sequence spans 260 residues: UPF0246 protein BPSL1241 (260 aa).

This sequence belongs to the UPF0246 family.

The sequence is that of UPF0246 protein BPSL1241 from Burkholderia pseudomallei (strain K96243).